We begin with the raw amino-acid sequence, 247 residues long: ATP synthase subunit a, chloroplastic (247 aa).

5 helical membrane-spanning segments follow: residues 38–58, 95–115, 134–154, 199–219, and 220–240; these read QVLITSWVVIAILLGSATIAV, VPFIGTMFLFIFVSNWSGALL, INTTVALALPTSMAYFYAGFT, LVVVVLVSLVPSVVPIPVMFL, and GLFTSGIQALIFATLAAAYIG.

Belongs to the ATPase A chain family. As to quaternary structure, F-type ATPases have 2 components, CF(1) - the catalytic core - and CF(0) - the membrane proton channel. CF(1) has five subunits: alpha(3), beta(3), gamma(1), delta(1), epsilon(1). CF(0) has four main subunits: a, b, b' and c.

It localises to the plastid. Its subcellular location is the chloroplast thylakoid membrane. Functionally, key component of the proton channel; it plays a direct role in the translocation of protons across the membrane. This Liriodendron tulipifera (Tuliptree) protein is ATP synthase subunit a, chloroplastic.